Here is a 94-residue protein sequence, read N- to C-terminus: Co-chaperonin GroES (94 aa).

The protein belongs to the GroES chaperonin family. In terms of assembly, heptamer of 7 subunits arranged in a ring. Interacts with the chaperonin GroEL.

Its subcellular location is the cytoplasm. Its function is as follows. Together with the chaperonin GroEL, plays an essential role in assisting protein folding. The GroEL-GroES system forms a nano-cage that allows encapsulation of the non-native substrate proteins and provides a physical environment optimized to promote and accelerate protein folding. GroES binds to the apical surface of the GroEL ring, thereby capping the opening of the GroEL channel. This is Co-chaperonin GroES from Staphylococcus carnosus (strain TM300).